A 257-amino-acid chain; its full sequence is Phosphatidylglycerol--prolipoprotein diacylglyceryl transferase (257 aa).

7 helical membrane-spanning segments follow: residues F13–G33, F49–F69, I88–Y108, F123–H143, F152–I172, Y186–F202, and I223–M243. R136 provides a ligand contact to a 1,2-diacyl-sn-glycero-3-phospho-(1'-sn-glycerol).

It belongs to the Lgt family.

The protein localises to the cell membrane. The enzyme catalyses L-cysteinyl-[prolipoprotein] + a 1,2-diacyl-sn-glycero-3-phospho-(1'-sn-glycerol) = an S-1,2-diacyl-sn-glyceryl-L-cysteinyl-[prolipoprotein] + sn-glycerol 1-phosphate + H(+). The protein operates within protein modification; lipoprotein biosynthesis (diacylglyceryl transfer). Functionally, catalyzes the transfer of the diacylglyceryl group from phosphatidylglycerol to the sulfhydryl group of the N-terminal cysteine of a prolipoprotein, the first step in the formation of mature lipoproteins. The chain is Phosphatidylglycerol--prolipoprotein diacylglyceryl transferase from Caldanaerobacter subterraneus subsp. tengcongensis (strain DSM 15242 / JCM 11007 / NBRC 100824 / MB4) (Thermoanaerobacter tengcongensis).